We begin with the raw amino-acid sequence, 275 residues long: Bis(5'-nucleosyl)-tetraphosphatase, symmetrical (275 aa).

The protein belongs to the Ap4A hydrolase family.

The catalysed reaction is P(1),P(4)-bis(5'-adenosyl) tetraphosphate + H2O = 2 ADP + 2 H(+). In terms of biological role, hydrolyzes diadenosine 5',5'''-P1,P4-tetraphosphate to yield ADP. The sequence is that of Bis(5'-nucleosyl)-tetraphosphatase, symmetrical from Nitrosospira multiformis (strain ATCC 25196 / NCIMB 11849 / C 71).